Reading from the N-terminus, the 623-residue chain is Glutathione import ATP-binding protein GsiA (623 aa).

ABC transporter domains follow at residues 15 to 269 (VENL…RALL) and 314 to 564 (LRVR…RKLL). Residues 49–56 (GESGSGKS) and 357–364 (GESGSGKS) each bind ATP.

Belongs to the ABC transporter superfamily. Glutathione importer (TC 3.A.1.5.11) family. The complex is composed of two ATP-binding proteins (GsiA), two transmembrane proteins (GsiC and GsiD) and a solute-binding protein (GsiB).

The protein resides in the cell inner membrane. It catalyses the reaction glutathione(out) + ATP + H2O = glutathione(in) + ADP + phosphate + H(+). Part of the ABC transporter complex GsiABCD involved in glutathione import. Responsible for energy coupling to the transport system. The chain is Glutathione import ATP-binding protein GsiA from Shigella sonnei (strain Ss046).